Here is a 362-residue protein sequence, read N- to C-terminus: Peptide chain release factor 1 (362 aa).

N5-methylglutamine is present on Q237.

It belongs to the prokaryotic/mitochondrial release factor family. Post-translationally, methylated by PrmC. Methylation increases the termination efficiency of RF1.

It is found in the cytoplasm. Its function is as follows. Peptide chain release factor 1 directs the termination of translation in response to the peptide chain termination codons UAG and UAA. This is Peptide chain release factor 1 from Legionella pneumophila (strain Corby).